The following is a 102-amino-acid chain: Large ribosomal subunit protein uL24 (102 aa).

The protein belongs to the universal ribosomal protein uL24 family. As to quaternary structure, part of the 50S ribosomal subunit.

Its function is as follows. One of two assembly initiator proteins, it binds directly to the 5'-end of the 23S rRNA, where it nucleates assembly of the 50S subunit. In terms of biological role, one of the proteins that surrounds the polypeptide exit tunnel on the outside of the subunit. This is Large ribosomal subunit protein uL24 from Paraburkholderia phytofirmans (strain DSM 17436 / LMG 22146 / PsJN) (Burkholderia phytofirmans).